A 567-amino-acid polypeptide reads, in one-letter code: MFS-type transporter poxA (567 aa).

A compositionally biased stretch (basic and acidic residues) spans 1-23 (MPASDRTSETGDVEKVTAAETPK). The segment at 1-24 (MPASDRTSETGDVEKVTAAETPKE) is disordered. 10 consecutive transmembrane segments (helical) span residues 35–55 (ALTGLPLYTVLVGLGLALFLG), 77–97 (ADIGWYGAAYPLTMSSIQLLA), 108–128 (LVFLVFFGLFMLGSLLCGVAV), 141–161 (GAGAAGVLSGTLAIVSAVVPL), 165–185 (SLILGLMMSLVGTAVVLGPVI), 197–217 (WCFYLNLPCGGVTLLALILFF), 240–260 (LAGCLGFIPAVVMLLLALQWG), 271–291 (SATIIGLFCGAGVSLILFLIW), 311–331 (IIASCLYGFALLGGYVVVGYF), and 349–369 (VMLLPNVITNFISKAVIGVIV). N-linked (GlcNAc...) asparagine glycosylation occurs at Asn370. 4 consecutive transmembrane segments (helical) span residues 372-392 (TGYFNPWLFFGAAVLAIGSGL), 410-430 (ILQGAALGIIQAPTLGVQVAL), 436-456 (LIPVALSLVIFFQYFGSSIML), and 515-535 (AIAGVMWLSTAAALFGFLVSF). A disordered region spans residues 547–567 (EENKKEAAEEEEEVKVAAVEA).

It belongs to the major facilitator superfamily. TCR/Tet family.

It localises to the cell membrane. Its function is as follows. MFS-type transporter; part of the gene cluster that mediates the biosynthesis of oxaleimides, cytotoxic compounds containing an unusual disubstituted succinimide moiety. This is MFS-type transporter poxA from Penicillium oxalicum (strain 114-2 / CGMCC 5302) (Penicillium decumbens).